The following is a 259-amino-acid chain: FAD-linked sulfhydryl oxidase (259 aa).

The protein belongs to the baculoviridae p33 family. Homodimer.

Its subcellular location is the host cytoplasm. The protein localises to the host nucleus. It catalyses the reaction 2 R'C(R)SH + O2 = R'C(R)S-S(R)CR' + H2O2. In terms of biological role, functional FAD-linked sulfhydryl oxidase that is required for infectious budded virion (BV) production and for the formation of enveloped occluded virion (ODV). The protein is FAD-linked sulfhydryl oxidase (P33) of Lepidoptera (butterflies and moths).